The primary structure comprises 246 residues: Protein crossbronx (246 aa).

The 158-residue stretch at 20-177 (QQEYKILAEY…VQESILESKA (158 aa)) folds into the UBC core domain.

Belongs to the ubiquitin-conjugating enzyme family. FTS subfamily.

The sequence is that of Protein crossbronx (cbx) from Drosophila grimshawi (Hawaiian fruit fly).